The primary structure comprises 640 residues: Uromodulin (640 aa).

The N-terminal stretch at 1–24 is a signal peptide; that stretch reads MGQPSLTWMLMVVVASWFITTAAT. An EGF-like 1 domain is found at 28 to 64; sequence EARWCSECHSNATCTEDEAVTTCTCQEGFTGDGLTCV. Disulfide bonds link cysteine 32-cysteine 41, cysteine 35-cysteine 50, cysteine 52-cysteine 63, cysteine 69-cysteine 83, cysteine 77-cysteine 92, cysteine 94-cysteine 106, cysteine 112-cysteine 126, cysteine 120-cysteine 135, cysteine 137-cysteine 148, cysteine 150-cysteine 161, cysteine 155-cysteine 170, cysteine 174-cysteine 267, cysteine 195-cysteine 282, cysteine 217-cysteine 255, cysteine 223-cysteine 287, cysteine 248-cysteine 256, cysteine 297-cysteine 306, cysteine 300-cysteine 315, cysteine 317-cysteine 347, cysteine 335-cysteine 425, and cysteine 366-cysteine 389. N-linked (GlcNAc...) asparagine glycosylation is present at asparagine 38. Positions 65 to 107 constitute an EGF-like 2; calcium-binding domain; sequence DLDECAIPGAHNCSANSSCVNTPGSFSCVCPEGFRLSPGLGCT. Residues asparagine 76 and asparagine 80 are each glycosylated (N-linked (GlcNAc...) asparagine). Positions 108–149 constitute an EGF-like 3; calcium-binding domain; it reads DVDECAEPGLSHCHALATCVNVVGSYLCVCPAGYRGDGWHCE. The segment at 150–171 is beta hairpin; it reads CSPGSCGPGLDCVPEGDALVCA. A D10C region spans residues 172–291; sequence DPCQAHRTLD…CHLAYCTDPS (120 aa). Residue asparagine 232 is glycosylated (N-linked (GlcNAc...) (complex) asparagine). Asparagine 275 carries N-linked (GlcNAc...) (high mannose) asparagine glycosylation. The EGF-like 4 domain maps to 292 to 323; that stretch reads SVEGTCEECSIDEDCKSNNGRWHCQCKQDFNI. Asparagine 322 carries N-linked (GlcNAc...) (complex) asparagine glycosylation. The interval 334-429 is ZP-N; that stretch reads ECGANDMKVS…KINFACSYPL (96 aa). The 256-residue stretch at 334 to 589 folds into the ZP domain; it reads ECGANDMKVS…PTCSGTRFRS (256 aa). N-linked (GlcNAc...) (complex) asparagine glycosylation is present at asparagine 396. The tract at residues 430 to 453 is flexible ZP-N/ZP-C linker; important for secretion and polymerization into filaments; sequence DMKVSLKTALQPMVSALNIRVGGT. The tract at residues 454 to 465 is internal hydrophobic patch (IHP); the sequence is GMFTVRMALFQT. The segment at 454–589 is ZP-C; that stretch reads GMFTVRMALF…PTCSGTRFRS (136 aa). 3 disulfides stabilise this stretch: cysteine 506-cysteine 566, cysteine 527-cysteine 582, and cysteine 571-cysteine 578. Asparagine 513 carries N-linked (GlcNAc...) (complex) asparagine; alternate glycosylation. Residue asparagine 513 is glycosylated (N-linked (GlcNAc...) (high mannose) asparagine; alternate). The segment at 586 to 589 is essential for cleavage by HPN; sequence RFRS. The interval 598-606 is external hydrophobic patch (EHP); regulates polymerization into filaments; that stretch reads VLNLGPITR. The GPI-anchor amidated serine moiety is linked to residue serine 614. Residues 615–640 constitute a propeptide, removed in mature form; it reads RAFSSLGLLKVWLPLLLSATLTLTFQ.

In terms of assembly, homodimer that then polymerizes into long filaments. The filaments can additionally assemble laterally to form a sheet. The filaments consist of a zigzag-shaped backbone with laterally protruding arms which interact with bacterial adhesin fimH. Two fimH molecules can bind to a single UMOD monomer. N-glycosylated. N-glycan heterogeneity at Asn-232: Hex7HexNAc6 (major) and dHex1Hex7HexNAc6 (minor); at Asn-322: dHex1Hex6HexNAc5 (minor), dHex1Hex7HexNAc6 (major) and dHex1Hex8HexNAc7 (minor); at Asn-396: Hex6HexNAc5 (major), dHex1Hex6HexNAc5 (minor) and Hex7HexNAc6 (minor). Glycosylated Asn-232 interacts with E.coli adhesin fimH. Other complex glycosylation sites may serve as binding sites for proteins from other bacteria inclduding K.pneumoniae, P.aeruginosa and S.mitis. Post-translationally, proteolytically cleaved at a conserved C-terminal proteolytic cleavage site to generate the secreted form found in urine. This cleavage is catalyzed by HPN. Expressed in the tubular cells of the kidney. Most abundant protein in normal urine (at protein level). Synthesized exclusively in the kidney. Expressed exclusively by epithelial cells of the thick ascending limb of Henle's loop (TALH) and of distal convoluted tubule lumen.

The protein resides in the apical cell membrane. Its subcellular location is the basolateral cell membrane. It localises to the cell projection. The protein localises to the cilium membrane. It is found in the secreted. Functions in biogenesis and organization of the apical membrane of epithelial cells of the thick ascending limb of Henle's loop (TALH), where it promotes formation of complex filamentous gel-like structure that may play a role in the water barrier permeability. May serve as a receptor for binding and endocytosis of cytokines (IL-1, IL-2) and TNF. Facilitates neutrophil migration across renal epithelia. Functionally, in the urine, may contribute to colloid osmotic pressure, retards passage of positively charged electrolytes, and inhibits formation of liquid containing supersaturated salts and subsequent formation of salt crystals. Protects against urinary tract infections by binding to type 1 fimbriated E.coli. Binds to bacterial adhesin fimH which mediates the stable formation of bacterial aggregates, prevents the binding of E.coli to uroplakins UPK1A and UPK1B which act as urothelial receptors for type I fimbriae, and allows for pathogen clearance through micturation. Also promotes aggregation of other bacteria including K.pneumoniae, P.aeruginosa and S.mitis and so may also protect against other uropathogens. The protein is Uromodulin (UMOD) of Homo sapiens (Human).